The sequence spans 275 residues: NH(3)-dependent NAD(+) synthetase (275 aa).

G46–S53 is an ATP binding site. D52 provides a ligand contact to Mg(2+). Residue R140 participates in deamido-NAD(+) binding. An ATP-binding site is contributed by T160. E165 serves as a coordination point for Mg(2+). K173 and D180 together coordinate deamido-NAD(+). Residues K189 and T211 each contribute to the ATP site. H260–K261 contacts deamido-NAD(+).

The protein belongs to the NAD synthetase family. Homodimer.

It catalyses the reaction deamido-NAD(+) + NH4(+) + ATP = AMP + diphosphate + NAD(+) + H(+). It functions in the pathway cofactor biosynthesis; NAD(+) biosynthesis; NAD(+) from deamido-NAD(+) (ammonia route): step 1/1. In terms of biological role, catalyzes the ATP-dependent amidation of deamido-NAD to form NAD. Uses ammonia as a nitrogen source. This is NH(3)-dependent NAD(+) synthetase from Escherichia coli O139:H28 (strain E24377A / ETEC).